A 292-amino-acid polypeptide reads, in one-letter code: Inositol monophosphatase 2 (292 aa).

The Mg(2+) site is built by glutamate 75, aspartate 94, isoleucine 96, aspartate 97, and aspartate 231. A substrate-binding site is contributed by glutamate 75. Residues 96–99 (IDGT) and aspartate 231 each bind substrate.

Belongs to the inositol monophosphatase superfamily. The cofactor is Mg(2+).

It catalyses the reaction a myo-inositol phosphate + H2O = myo-inositol + phosphate. Its pathway is polyol metabolism; myo-inositol biosynthesis; myo-inositol from D-glucose 6-phosphate: step 2/2. With respect to regulation, inhibited by Li(+) and Na(+). In terms of biological role, responsible for the provision of inositol required for synthesis of phosphatidylinositol and polyphosphoinositides and involved in the inositol cycle of calcium signaling. The chain is Inositol monophosphatase 2 (INM2) from Saccharomyces cerevisiae (strain ATCC 204508 / S288c) (Baker's yeast).